Here is a 327-residue protein sequence, read N- to C-terminus: Metaxin-1 homolog (327 aa).

The helical transmembrane segment at 281–301 (IVAGVGAVLAMGAFAAWRGIY) threads the bilayer.

The protein belongs to the metaxin family. As to quaternary structure, associates with the mitochondrial contact site and cristae organizing system (MICOS) complex (also known as MINOS or MitOS complex).

Its subcellular location is the mitochondrion outer membrane. Its function is as follows. Involved in transport of proteins into the mitochondrion. Essential for embryonic development. The sequence is that of Metaxin-1 homolog from Drosophila melanogaster (Fruit fly).